We begin with the raw amino-acid sequence, 402 residues long: tRNA(Met) cytidine acetate ligase (402 aa).

ATP is bound by residues 7 to 20 (ITEYNPFHLGHELH), Gly102, Asn171, and Arg196.

Belongs to the TmcAL family.

It is found in the cytoplasm. The enzyme catalyses cytidine(34) in elongator tRNA(Met) + acetate + ATP = N(4)-acetylcytidine(34) in elongator tRNA(Met) + AMP + diphosphate. In terms of biological role, catalyzes the formation of N(4)-acetylcytidine (ac(4)C) at the wobble position of elongator tRNA(Met), using acetate and ATP as substrates. First activates an acetate ion to form acetyladenylate (Ac-AMP) and then transfers the acetyl group to tRNA to form ac(4)C34. This Clostridium perfringens (strain ATCC 13124 / DSM 756 / JCM 1290 / NCIMB 6125 / NCTC 8237 / Type A) protein is tRNA(Met) cytidine acetate ligase.